We begin with the raw amino-acid sequence, 473 residues long: Sarcalumenin (473 aa).

The first 20 residues, 1-20 (MRALVLLGCLLASLLFSGQA), serve as a signal peptide directing secretion. Residues 90-331 (ITSKPMVLFL…IENRLENKIA (242 aa)) form the Dynamin-type G domain. A G1 motif region spans residues 100–107 (GPWSVGKS). The segment at 128–129 (EP) is G2 motif. Positions 190–193 (DTPG) are G3 motif. The G4 motif stretch occupies residues 255 to 258 (NKAD). A region of interest (G5 motif) is located at residue proline 278. Asparagine 281 and asparagine 389 each carry an N-linked (GlcNAc...) asparagine glycan.

It belongs to the TRAFAC class dynamin-like GTPase superfamily. Dynamin/Fzo/YdjA family. In terms of processing, N-glycosylated.

It is found in the sarcoplasmic reticulum lumen. The protein resides in the sarcoplasmic reticulum membrane. This Homo sapiens (Human) protein is Sarcalumenin (SRL).